A 548-amino-acid chain; its full sequence is ATP synthase subunit alpha (548 aa).

Gly172–Thr179 contacts ATP.

This sequence belongs to the ATPase alpha/beta chains family. In terms of assembly, F-type ATPases have 2 components, CF(1) - the catalytic core - and CF(0) - the membrane proton channel. CF(1) has five subunits: alpha(3), beta(3), gamma(1), delta(1), epsilon(1). CF(0) has three main subunits: a(1), b(2) and c(9-12). The alpha and beta chains form an alternating ring which encloses part of the gamma chain. CF(1) is attached to CF(0) by a central stalk formed by the gamma and epsilon chains, while a peripheral stalk is formed by the delta and b chains.

Its subcellular location is the cell membrane. The enzyme catalyses ATP + H2O + 4 H(+)(in) = ADP + phosphate + 5 H(+)(out). In terms of biological role, produces ATP from ADP in the presence of a proton gradient across the membrane. The alpha chain is a regulatory subunit. The sequence is that of ATP synthase subunit alpha from Mycolicibacterium smegmatis (strain ATCC 700084 / mc(2)155) (Mycobacterium smegmatis).